We begin with the raw amino-acid sequence, 426 residues long: Serine hydroxymethyltransferase (426 aa).

Residues L121 and 125–127 contribute to the (6S)-5,6,7,8-tetrahydrofolate site; that span reads GHL. An N6-(pyridoxal phosphate)lysine modification is found at K230. 354-356 serves as a coordination point for (6S)-5,6,7,8-tetrahydrofolate; it reads SPF.

It belongs to the SHMT family. As to quaternary structure, homodimer. The cofactor is pyridoxal 5'-phosphate.

The protein localises to the cytoplasm. It catalyses the reaction (6R)-5,10-methylene-5,6,7,8-tetrahydrofolate + glycine + H2O = (6S)-5,6,7,8-tetrahydrofolate + L-serine. It participates in one-carbon metabolism; tetrahydrofolate interconversion. Its pathway is amino-acid biosynthesis; glycine biosynthesis; glycine from L-serine: step 1/1. Catalyzes the reversible interconversion of serine and glycine with tetrahydrofolate (THF) serving as the one-carbon carrier. This reaction serves as the major source of one-carbon groups required for the biosynthesis of purines, thymidylate, methionine, and other important biomolecules. Also exhibits THF-independent aldolase activity toward beta-hydroxyamino acids, producing glycine and aldehydes, via a retro-aldol mechanism. In Acaryochloris marina (strain MBIC 11017), this protein is Serine hydroxymethyltransferase.